Reading from the N-terminus, the 419-residue chain is MNDLIEKAKKVKEASKKLMNLSENEKNRALSCISQKILEKMDFILQENQKDMENAVSKGIKGALLDRLKLTEDRIKQICKGIEDVIKLPDPVGEVISMWKRPNGLVIGQKRVPIGAIGIIYEARPNVTVDAAVLCLKAGNSVLLRGGSEAINSNVALVKVMKEGLLEAGIEEGSIEIVEDTSRETAIAMMKLNEYLDLLIPRGGANLIKTVVQNATVPVIETGVGNCHVFVDESADFEMAKAIVINAKTQRPGVCNAAEKLLVHKNIAESFLPMIVKELMAKGVEIRGCSKTVEICKKNGIEVKEATEDDWYTEYLDLIIGVKVVDSIDAAIEHINKYGSKHSEAIVTRDYFNAQKFLDYVDAAAVYVNASTRFTDGFEFGFGAEIGISTQKLHARGPMGLKELTTIKYIIYGSGQVRE.

It belongs to the gamma-glutamyl phosphate reductase family.

It is found in the cytoplasm. It catalyses the reaction L-glutamate 5-semialdehyde + phosphate + NADP(+) = L-glutamyl 5-phosphate + NADPH + H(+). Its pathway is amino-acid biosynthesis; L-proline biosynthesis; L-glutamate 5-semialdehyde from L-glutamate: step 2/2. In terms of biological role, catalyzes the NADPH-dependent reduction of L-glutamate 5-phosphate into L-glutamate 5-semialdehyde and phosphate. The product spontaneously undergoes cyclization to form 1-pyrroline-5-carboxylate. In Caldicellulosiruptor bescii (strain ATCC BAA-1888 / DSM 6725 / KCTC 15123 / Z-1320) (Anaerocellum thermophilum), this protein is Gamma-glutamyl phosphate reductase.